The chain runs to 304 residues: Putative HTH-type transcriptional regulatory protein Memar_2347 (304 aa).

The region spanning 132–189 (LREVRERFRMSLGDLASHLGVSRRTISKYESGMGTTLDVAIKLEEIFNAPLVETIELL) is the HTH cro/C1-type domain. The H-T-H motif DNA-binding region spans 143-162 (LGDLASHLGVSRRTISKYES).

This chain is Putative HTH-type transcriptional regulatory protein Memar_2347, found in Methanoculleus marisnigri (strain ATCC 35101 / DSM 1498 / JR1).